Consider the following 424-residue polypeptide: Histidine--tRNA ligase (424 aa).

This sequence belongs to the class-II aminoacyl-tRNA synthetase family. Homodimer.

Its subcellular location is the cytoplasm. It carries out the reaction tRNA(His) + L-histidine + ATP = L-histidyl-tRNA(His) + AMP + diphosphate + H(+). This is Histidine--tRNA ligase from Escherichia coli O139:H28 (strain E24377A / ETEC).